The following is a 234-amino-acid chain: Sugar fermentation stimulation protein homolog (234 aa).

The protein belongs to the SfsA family.

The polypeptide is Sugar fermentation stimulation protein homolog (Bartonella quintana (strain Toulouse) (Rochalimaea quintana)).